Reading from the N-terminus, the 503-residue chain is Maturase K (503 aa).

Belongs to the intron maturase 2 family. MatK subfamily.

The protein localises to the plastid. Its subcellular location is the chloroplast. Functionally, usually encoded in the trnK tRNA gene intron. Probably assists in splicing its own and other chloroplast group II introns. The sequence is that of Maturase K from Agonis flexuosa (Australian willow myrtle).